A 118-amino-acid polypeptide reads, in one-letter code: MLLALALLLAFLPPASQKSSNLEGRTKSVTRPTGSSAVITCDLPVENAVYTHWYLHQEGKAPQRLLYYDSYNSRVVLESGISREKYHTYASTGKSLKFILENLIERDSGVYYCATWDR.

The first 17 residues, 1–17 (MLLALALLLAFLPPASQ), serve as a signal peptide directing secretion. One can recognise an Ig-like domain in the interval 18–118 (KSSNLEGRTK…GVYYCATWDR (101 aa)). The cysteines at positions 41 and 113 are disulfide-linked.

In terms of assembly, gamma-delta TR is a heterodimer composed of a gamma and delta chain; disulfide-linked. The gamma-delta TR is associated with the transmembrane signaling CD3 coreceptor proteins following the stoichiometry: a single gamma-delta TR heterodimer associates with one CD3D-CD3E heterodimer, one CD3G-CD3E heterodimer and one CD247 homodimer forming a stable octameric structure. Upon activation, gamma-delta TR complex associates with FCER1G to initiate intracellular signaling.

It is found in the cell membrane. Functionally, v region of the variable domain of T cell receptor (TR) gamma chain that participates in the antigen recognition. Gamma-delta TRs recognize a variety of self and foreign non-peptide antigens frequently expressed at the epithelial boundaries between the host and external environment, including endogenous lipids presented by MH-like protein CD1D and phosphoantigens presented by butyrophilin-like molecule BTN3A1. Upon antigen recognition induces rapid, innate-like immune responses involved in pathogen clearance and tissue repair. Binding of gamma-delta TR complex to antigen triggers phosphorylation of immunoreceptor tyrosine-based activation motifs (ITAMs) in the CD3 chains by the LCK and FYN kinases, allowing the recruitment, phosphorylation, and activation of ZAP70 that facilitates phosphorylation of the scaffolding proteins LCP2 and LAT. This lead to the formation of a supramolecular signalosome that recruits the phospholipase PLCG1, resulting in calcium mobilization and ERK activation, ultimately leading to T cell expansion and differentiation into effector cells. Gamma-delta TRs are produced through somatic rearrangement of a limited repertoire of variable (V), diversity (D), and joining (J) genes. The potential diversity of gamma-delta TRs is conferred by the unique ability to rearrange (D) genes in tandem and to utilize all three reading frames. The combinatorial diversity is considerably increased by the sequence exonuclease trimming and random nucleotide (N) region additions which occur during the V-(D)-J rearrangements. The sequence is that of T cell receptor gamma variable 8 from Homo sapiens (Human).